A 100-amino-acid chain; its full sequence is NADH-quinone oxidoreductase subunit K 2 (100 aa).

Transmembrane regions (helical) follow at residues 4-24, 28-48, and 60-80; these read LWWSILLGVALFVIGAGGVLL, ILIVLMSLELLLNSVNINFIA, and IFAIFVIAITAAEVAVALGIL.

It belongs to the complex I subunit 4L family. As to quaternary structure, NDH-1 is composed of 14 different subunits. Subunits NuoA, H, J, K, L, M, N constitute the membrane sector of the complex.

The protein resides in the cell inner membrane. The catalysed reaction is a quinone + NADH + 5 H(+)(in) = a quinol + NAD(+) + 4 H(+)(out). Functionally, NDH-1 shuttles electrons from NADH, via FMN and iron-sulfur (Fe-S) centers, to quinones in the respiratory chain. The immediate electron acceptor for the enzyme in this species is believed to be ubiquinone. Couples the redox reaction to proton translocation (for every two electrons transferred, four hydrogen ions are translocated across the cytoplasmic membrane), and thus conserves the redox energy in a proton gradient. The protein is NADH-quinone oxidoreductase subunit K 2 of Rhizobium meliloti (strain 1021) (Ensifer meliloti).